The sequence spans 601 residues: uncharacterized protein (601 aa).

3 consecutive transmembrane segments (helical) span residues 74–94, 104–124, and 531–551; these read IFFF…VFSI, VSFL…PNDG, and LVLL…NYYY.

The protein resides in the endoplasmic reticulum membrane. This is an uncharacterized protein from Schizosaccharomyces pombe (strain 972 / ATCC 24843) (Fission yeast).